The primary structure comprises 1140 residues: MKNVFQLLIPLFFHLFSLVSLQNIPVSTGTTRPKLKVGIAAAQKTQSASIGWNVCGGAVPLAIERLKQAGYVTNFDFEYYVEYTECDLASTVRTGINFLKNLEVDVIIGPPCSEAIRTMATLATLYKKPVLGWGFVSQADLSDMTRFPYLITVLPTSQTLGYAASKLLELYKWDKVALLYYKSEVNHCGGVMNDVETTFNDPSTYSIQIVLKAEIDASDNVTTNAVISSVKTRARIILWCAQLGSEKRDYMIKISQLGLDTDEYVHVLISMRSIGFGVQTFVGKTTFKLSGLTPVWESFSNVTDGLENVAKRGATNVLVIDLNSEVSDKAYLDYMQRNILNVVKLPPLNCSTVDCVSSTATGMGAYARHLFDVVYLYGIALTRVNSTDSAVYDDMSKLIPQFVTSFNGMTGLVAINQNLSRMPLYQLYGLDEQYEQTSLMNLSFADGTTVATISLAYSNESSAVWHFWGGIRPLATPICGFLGNSCPLPFWEQYGILIFVGAGVFLIMITTNLICFLFMIKNRREEQARINSEWQIPFVKLRELERKSKGTSKRSLQSAPSTITGESKVSTGSEFCENYEVKMFEKDMVLTMKFQYMNLNKADMDKFVKLRKLDHENLNKFIGLSIDSSQFISVTKLCSRGSLLDILYKGNFSMDFFFMYCIIKDVAEGMSYLHKSFLRLHGNLRSATCLVNDSWQVKLAEFGFDQLLEEITPTKRRLLWAAPEVLRGSLTVSQMDPSADVFSFAIIASEILTRKEAWDLKERKEGYDEIIYRVKKGGSFPIRPDIITDVPDVNPTLIALVKDCWAEAPEDRPTAENICEQLRDLMPKTKSNLMDHVFNMLEEYTSTLEVEVEERTKELTLEKKKADLLLSRMLPKQVAERLKAGQTVEPEGFDSVTVFFSDVVKFTILASKCTPFQVVNLLNDLYSNFDTIIEEHGVYKVESIGDGYLCVSGLPTRNGFNHIKQIVDMSLKFMDYCKNFKIPHLPRERVELRIGVNSGPCVAGVVGLSMPRYCLFGDTVNTASRMESNGKPSLIHLTSDAHLLLMKHFPHQYETNSRGEVIIKGKGVMETFWVLGRSGDIEPSISNRSTPPVTQERFTVRAPDTPEARSVSSHGSRPSSNHNNNNDPLYRQYKMDTLKI.

The first 21 residues, 1–21, serve as a signal peptide directing secretion; it reads MKNVFQLLIPLFFHLFSLVSL. The Extracellular portion of the chain corresponds to 22 to 495; the sequence is QNIPVSTGTT…CPLPFWEQYG (474 aa). N-linked (GlcNAc...) asparagine glycans are attached at residues N220, N301, N349, N385, N418, N441, and N459. The chain crosses the membrane as a helical span at residues 496 to 516; sequence ILIFVGAGVFLIMITTNLICF. Topologically, residues 517 to 1140 are cytoplasmic; the sequence is LFMIKNRREE…RQYKMDTLKI (624 aa). The Protein kinase domain maps to 538–826; it reads FVKLRELERK…NICEQLRDLM (289 aa). Residues 544–552 and K582 contribute to the ATP site; that span reads LERKSKGTS. The Guanylate cyclase domain maps to 897-1027; the sequence is TVFFSDVVKF…DTVNTASRME (131 aa). Positions 1083 to 1140 are disordered; sequence PSISNRSTPPVTQERFTVRAPDTPEARSVSSHGSRPSSNHNNNNDPLYRQYKMDTLKI. A compositionally biased stretch (polar residues) spans 1084 to 1097; sequence SISNRSTPPVTQER. A compositionally biased stretch (low complexity) spans 1109-1126; that stretch reads RSVSSHGSRPSSNHNNNN.

This sequence belongs to the adenylyl cyclase class-4/guanylyl cyclase family. Expressed asymmetrically in ASE right (ASER) sensory neuron and bilaterally in ASI sensory neurons. Expressed in PVT interneuron.

The protein localises to the cell membrane. It carries out the reaction GTP = 3',5'-cyclic GMP + diphosphate. Its function is as follows. Guanylate cyclase involved in the production of the second messenger cGMP. This is Receptor-type guanylate cyclase gcy-3 from Caenorhabditis elegans.